The following is a 203-amino-acid chain: Ras-related protein Rab-13 (203 aa).

The GTP site is built by Ser17, Gly18, Gly20, Lys21, Thr22, Cys23, and Thr40. Thr22 serves as a coordination point for Mg(2+). The short motif at Asp31–Phe45 is the Switch 1 element. Residue Thr40 participates in Mg(2+) binding. Residues Lys46 and Lys58 each participate in a glycyl lysine isopeptide (Lys-Gly) (interchain with G-Cter in ubiquitin) cross-link. Residue Asp63 coordinates Mg(2+). Positions Asp63–Gly80 match the Switch 2 motif. GTP-binding residues include Gly66, Asn121, Lys122, Asp124, Ala152, and Lys153. The interval Thr173–Gly203 is disordered. The residue at position 178 (Ser178) is a Phosphoserine. Over residues Ser178–Leu189 the composition is skewed to polar residues. Cysteine methyl ester is present on Cys200. The S-geranylgeranyl cysteine moiety is linked to residue Cys200. The propeptide at Ser201–Gly203 is removed in mature form.

It belongs to the small GTPase superfamily. Rab family. In terms of assembly, interacts (GTP-bound form) with MICALL2; competes with RAB8A and is involved in tight junctions assembly. Interacts (GTP-bound form) with MICALL1. Interacts (GTP-bound form) with MICAL1, MICAL3, MICALCL, EHBP1 and EHBP1L1; ternary complexes of RAB8A, RAB13 and either MICAL1 or EHBP1L1 are possible. Interacts with PRKACA; downstream effector of RAB13 involved in tight junction assembly. Interacts with GRB2; may recruit RAB13 to the leading edge of migrating endothelial cells where it can activate RHOA. Interacts (isoprenylated form) with PDE6D; dissociates RAB13 from membranes. Interacts with BICDL2/BICDR2. Interacts with LEPROT and LEPROTL1. The cofactor is Mg(2+). Post-translationally, ubiquitinated via 'Lys-11'-linked ubiquitination on Lys-46 and Lys-58; impairing the recruitment of guanosine diphosphate (GDP) dissociation inhibitor 1/GDI1. As to expression, highest levels found in lung, kidney, whole brain and spinal cord. Expressed in all tissues tested including Sertoli and germ cells (at protein level). Also detected in osteoclasts.

Its subcellular location is the cell membrane. It is found in the cytoplasmic vesicle membrane. The protein resides in the cell junction. It localises to the tight junction. The protein localises to the golgi apparatus. Its subcellular location is the trans-Golgi network membrane. It is found in the recycling endosome membrane. The protein resides in the cell projection. It localises to the lamellipodium. It carries out the reaction GTP + H2O = GDP + phosphate + H(+). With respect to regulation, regulated by guanine nucleotide exchange factors (GEFs) including DENND1C, which promote the exchange of bound GDP for free GTP. Regulated by GTPase activating proteins (GAPs) which increase the GTP hydrolysis activity. Inhibited by GDP dissociation inhibitors (GDIs). Activated in response to insulin. In terms of biological role, the small GTPases Rab are key regulators of intracellular membrane trafficking, from the formation of transport vesicles to their fusion with membranes. Rabs cycle between an inactive GDP-bound form and an active GTP-bound form that is able to recruit to membranes different sets of downstream effectors directly responsible for vesicle formation, movement, tethering and fusion. RAB13 is involved in endocytic recycling and regulates the transport to the plasma membrane of transmembrane proteins like the tight junction protein OCLN/occludin. Thereby, it regulates the assembly and the activity of tight junctions. Moreover, it may also regulate tight junction assembly by activating the PKA signaling pathway and by reorganizing the actin cytoskeleton through the activation of the downstream effectors PRKACA and MICALL2 respectively. Through its role in tight junction assembly, may play a role in the establishment of Sertoli cell barrier. Plays also a role in angiogenesis through regulation of endothelial cells chemotaxis. Also involved in neurite outgrowth. Has also been proposed to play a role in post-Golgi membrane trafficking from the TGN to the recycling endosome. Finally, it has been involved in insulin-induced transport to the plasma membrane of the glucose transporter GLUT4 and therefore may play a role in glucose homeostasis. This is Ras-related protein Rab-13 from Rattus norvegicus (Rat).